We begin with the raw amino-acid sequence, 438 residues long: Minor capsid protein p49 (438 aa).

The tract at residues 134-167 is disordered; it reads PQVSGLKDTQKNCLTQPSSLPSLKNPKNSSVPST. Polar residues predominate over residues 144 to 167; that stretch reads KNCLTQPSSLPSLKNPKNSSVPST.

This sequence belongs to the asfivirus p49 structural protein family.

It is found in the virion. Functionally, together with the penton and the other minor capsid proteins (M1249L, p17), forms a complicated network immediately below the outer capsid shell, stabilizing the whole capsid. Plays an essential role in the formation of infectious virus particles. Especially required for the formation of the capsid vertices. During virion assembly, associates with the membrane and probably mediates the docking of the penton complex to the inner membrane, where it recruits the capsomers to form the penton core. This chain is Minor capsid protein p49, found in Ornithodoros (relapsing fever ticks).